A 283-amino-acid polypeptide reads, in one-letter code: Zinc import ATP-binding protein ZnuC (283 aa).

The ABC transporter domain maps to 13–228 (VEMRNAGVHR…PEYVRLFGAR (216 aa)). ATP is bound at residue 45–52 (GPNGSGKS). The tract at residues 264–283 (HHHDHARDGGQGGGGHGHAG) is disordered. Gly residues predominate over residues 272 to 283 (GGQGGGGHGHAG).

It belongs to the ABC transporter superfamily. Zinc importer (TC 3.A.1.15.5) family. As to quaternary structure, the complex is composed of two ATP-binding proteins (ZnuC), two transmembrane proteins (ZnuB) and a solute-binding protein (ZnuA).

The protein localises to the cell inner membrane. It carries out the reaction Zn(2+)(out) + ATP(in) + H2O(in) = Zn(2+)(in) + ADP(in) + phosphate(in) + H(+)(in). Functionally, part of the ABC transporter complex ZnuABC involved in zinc import. Responsible for energy coupling to the transport system. The protein is Zinc import ATP-binding protein ZnuC of Chelativorans sp. (strain BNC1).